A 620-amino-acid chain; its full sequence is 1-deoxy-D-xylulose-5-phosphate synthase (620 aa).

Thiamine diphosphate contacts are provided by residues His-80 and 121–123; that span reads GHS. Asp-152 contributes to the Mg(2+) binding site. Thiamine diphosphate is bound by residues 153–154, Asn-181, Tyr-288, and Glu-370; that span reads GA. Mg(2+) is bound at residue Asn-181.

This sequence belongs to the transketolase family. DXPS subfamily. As to quaternary structure, homodimer. The cofactor is Mg(2+). Thiamine diphosphate is required as a cofactor.

The enzyme catalyses D-glyceraldehyde 3-phosphate + pyruvate + H(+) = 1-deoxy-D-xylulose 5-phosphate + CO2. The protein operates within metabolic intermediate biosynthesis; 1-deoxy-D-xylulose 5-phosphate biosynthesis; 1-deoxy-D-xylulose 5-phosphate from D-glyceraldehyde 3-phosphate and pyruvate: step 1/1. Its function is as follows. Catalyzes the acyloin condensation reaction between C atoms 2 and 3 of pyruvate and glyceraldehyde 3-phosphate to yield 1-deoxy-D-xylulose-5-phosphate (DXP). In Klebsiella pneumoniae subsp. pneumoniae (strain ATCC 700721 / MGH 78578), this protein is 1-deoxy-D-xylulose-5-phosphate synthase.